The sequence spans 83 residues: MMKKFLIALVKAYQRWISPLFPLSCRFCPTCSVYMIQAIEKHGLKGVLMGIARILRCHPLSETGDDPVPDYFSLKRKKTPLDN.

The protein belongs to the UPF0161 family.

The protein resides in the cell membrane. Could be involved in insertion of integral membrane proteins into the membrane. The protein is Putative membrane protein insertion efficiency factor of Streptococcus thermophilus (strain ATCC BAA-250 / LMG 18311).